A 496-amino-acid chain; its full sequence is Latent membrane protein 2 (496 aa).

The tract at residues Met1–Ser108 is disordered. The Cytoplasmic segment spans residues Met1 to Val123. Over residues Asn27–Thr41 the composition is skewed to polar residues. Positions Pro97–Tyr101 match the PPxY motif motif. The residue at position 112 (Tyr112) is a Phosphotyrosine; by host. Residues Cys124–Phe144 traverse the membrane as a helical segment. The Extracellular segment spans residues Thr145–Ser147. The chain crosses the membrane as a helical span at residues Val148–Ala168. Residues Ser169–Lys177 lie on the Cytoplasmic side of the membrane. A helical transmembrane segment spans residues Leu178–Trp197. Over Arg198–Ala210 the chain is Extracellular. The helical transmembrane segment at Leu211 to Ile231 threads the bilayer. The Cytoplasmic segment spans residues Leu232–Arg240. The chain crosses the membrane as a helical span at residues Leu241 to Val261. Residues Leu262–Pro266 lie on the Extracellular side of the membrane. Residues Leu267–Leu287 form a helical membrane-spanning segment. The Cytoplasmic portion of the chain corresponds to Ser288–Thr295. Residues Leu296–Gly316 traverse the membrane as a helical segment. A topological domain (extracellular) is located at residue Thr317. Residues Leu318–Cys338 traverse the membrane as a helical segment. Topologically, residues Ser339–Arg353 are cytoplasmic. The chain crosses the membrane as a helical span at residues Leu354–Ile374. Topologically, residues Leu375–Phe387 are extracellular. A helical transmembrane segment spans residues Ile388–Ile408. The Cytoplasmic portion of the chain corresponds to Leu409–Pro421. The chain crosses the membrane as a helical span at residues Val422–Met442. The Extracellular segment spans residues Thr443–Ser448. The chain crosses the membrane as a helical span at residues Ala449–Ile469. Residues Arg470–Val496 lie on the Cytoplasmic side of the membrane.

This sequence belongs to the herpesviridae LMP-2 family. In terms of assembly, the cytoplasmic N-terminal domain interacts with human SRC family protein tyrosine kinases SYK and LYN. Binds human ITCH, WWP2 and NEDD4L. In terms of processing, phosphorylated on cytoplasmic N-terminal tyrosine residues, possibly by human LYN. Post-translationally, can be ubiquitinated by human ITCH and WWP2 on the N-terminus in a lysine-independent manner.

The protein localises to the host cell membrane. The protein resides in the host endomembrane system. It is found in the host cytoplasm. It localises to the host perinuclear region. In terms of biological role, maintains EBV latent infection of B-lymphocyte, by preventing lytic reactivation of the virus in response to surface immunoglobulin (sIg) cross-linking. Acts like a dominant negative inhibitor of the sIg-associated protein tyrosine kinases, LYN and SYK. Also blocks translocation of the B-cell antigen receptor (BCR) into lipid rafts, preventing the subsequent signaling and accelerated internalization of the BCR upon BCR cross-linking. Serves as a molecular scaffold to recruit SYK, LYN and E3 protein-ubiquitin ligases, such as ITCH and NEDD4L, leading to ubiquitination and potential degradation of both tyrosines kinases. Possesses a constitutive signaling activity in non-transformed cells, inducing bypass of normal B lymphocyte developmental checkpoints allowing immunoglobulin-negative cells to colonize peripheral lymphoid organs. Functionally, may be a negative regulator of isoform LMP2A. This is Latent membrane protein 2 (LMP2) from Homo sapiens (Human).